A 616-amino-acid chain; its full sequence is Dihydroxy-acid dehydratase (616 aa).

Residue Asp-81 coordinates Mg(2+). Residue Cys-122 participates in [2Fe-2S] cluster binding. Mg(2+) is bound by residues Asp-123 and Lys-124. Lys-124 carries the post-translational modification N6-carboxylysine. Residue Cys-195 participates in [2Fe-2S] cluster binding. Residue Glu-491 participates in Mg(2+) binding. The active-site Proton acceptor is Ser-517.

The protein belongs to the IlvD/Edd family. In terms of assembly, homodimer. [2Fe-2S] cluster is required as a cofactor. It depends on Mg(2+) as a cofactor.

The enzyme catalyses (2R)-2,3-dihydroxy-3-methylbutanoate = 3-methyl-2-oxobutanoate + H2O. It catalyses the reaction (2R,3R)-2,3-dihydroxy-3-methylpentanoate = (S)-3-methyl-2-oxopentanoate + H2O. It functions in the pathway amino-acid biosynthesis; L-isoleucine biosynthesis; L-isoleucine from 2-oxobutanoate: step 3/4. It participates in amino-acid biosynthesis; L-valine biosynthesis; L-valine from pyruvate: step 3/4. Its function is as follows. Functions in the biosynthesis of branched-chain amino acids. Catalyzes the dehydration of (2R,3R)-2,3-dihydroxy-3-methylpentanoate (2,3-dihydroxy-3-methylvalerate) into 2-oxo-3-methylpentanoate (2-oxo-3-methylvalerate) and of (2R)-2,3-dihydroxy-3-methylbutanoate (2,3-dihydroxyisovalerate) into 2-oxo-3-methylbutanoate (2-oxoisovalerate), the penultimate precursor to L-isoleucine and L-valine, respectively. The protein is Dihydroxy-acid dehydratase of Pectobacterium carotovorum subsp. carotovorum (strain PC1).